The sequence spans 248 residues: Carboxy-S-adenosyl-L-methionine synthase (248 aa).

Residues Y40, 65–67 (GCS), 95–96 (DN), 123–124 (DI), N138, and R205 contribute to the S-adenosyl-L-methionine site.

It belongs to the class I-like SAM-binding methyltransferase superfamily. Cx-SAM synthase family. As to quaternary structure, homodimer.

The enzyme catalyses prephenate + S-adenosyl-L-methionine = carboxy-S-adenosyl-L-methionine + 3-phenylpyruvate + H2O. In terms of biological role, catalyzes the conversion of S-adenosyl-L-methionine (SAM) to carboxy-S-adenosyl-L-methionine (Cx-SAM). This is Carboxy-S-adenosyl-L-methionine synthase from Hahella chejuensis (strain KCTC 2396).